The primary structure comprises 155 residues: Small ribosomal subunit protein uS7c (155 aa).

It belongs to the universal ribosomal protein uS7 family. As to quaternary structure, part of the 30S ribosomal subunit.

The protein localises to the plastid. The protein resides in the chloroplast. In terms of biological role, one of the primary rRNA binding proteins, it binds directly to 16S rRNA where it nucleates assembly of the head domain of the 30S subunit. The polypeptide is Small ribosomal subunit protein uS7c (rps7) (Ananas comosus (Pineapple)).